Here is a 134-residue protein sequence, read N- to C-terminus: S-adenosylmethionine decarboxylase proenzyme (134 aa).

Catalysis depends on serine 64, which acts as the Schiff-base intermediate with substrate; via pyruvic acid. Serine 64 bears the Pyruvic acid (Ser); by autocatalysis mark. Histidine 69 acts as the Proton acceptor; for processing activity in catalysis. Cysteine 84 functions as the Proton donor; for catalytic activity in the catalytic mechanism.

Belongs to the prokaryotic AdoMetDC family. Type 1 subfamily. In terms of assembly, heterotetramer of two alpha and two beta chains arranged as a dimer of alpha/beta heterodimers. Pyruvate serves as cofactor. In terms of processing, is synthesized initially as an inactive proenzyme. Formation of the active enzyme involves a self-maturation process in which the active site pyruvoyl group is generated from an internal serine residue via an autocatalytic post-translational modification. Two non-identical subunits are generated from the proenzyme in this reaction, and the pyruvate is formed at the N-terminus of the alpha chain, which is derived from the carboxyl end of the proenzyme. The post-translation cleavage follows an unusual pathway, termed non-hydrolytic serinolysis, in which the side chain hydroxyl group of the serine supplies its oxygen atom to form the C-terminus of the beta chain, while the remainder of the serine residue undergoes an oxidative deamination to produce ammonia and the pyruvoyl group blocking the N-terminus of the alpha chain.

The catalysed reaction is S-adenosyl-L-methionine + H(+) = S-adenosyl 3-(methylsulfanyl)propylamine + CO2. It participates in amine and polyamine biosynthesis; S-adenosylmethioninamine biosynthesis; S-adenosylmethioninamine from S-adenosyl-L-methionine: step 1/1. Catalyzes the decarboxylation of S-adenosylmethionine to S-adenosylmethioninamine (dcAdoMet), the propylamine donor required for the synthesis of the polyamines spermine and spermidine from the diamine putrescine. This chain is S-adenosylmethionine decarboxylase proenzyme, found in Hydrogenobaculum sp. (strain Y04AAS1).